The following is a 398-amino-acid chain: Tryptophan synthase beta chain (398 aa).

Position 90 is an N6-(pyridoxal phosphate)lysine (Lys-90).

Belongs to the TrpB family. As to quaternary structure, tetramer of two alpha and two beta chains. It depends on pyridoxal 5'-phosphate as a cofactor.

It carries out the reaction (1S,2R)-1-C-(indol-3-yl)glycerol 3-phosphate + L-serine = D-glyceraldehyde 3-phosphate + L-tryptophan + H2O. Its pathway is amino-acid biosynthesis; L-tryptophan biosynthesis; L-tryptophan from chorismate: step 5/5. Functionally, the beta subunit is responsible for the synthesis of L-tryptophan from indole and L-serine. This Anoxybacillus flavithermus (strain DSM 21510 / WK1) protein is Tryptophan synthase beta chain.